Reading from the N-terminus, the 302-residue chain is Probable alpha-L-glutamate ligase 1 (302 aa).

Residues 104–287 form the ATP-grasp domain; that stretch reads MQLLSRKGIG…VANMIIEFIE (184 aa). ATP contacts are provided by residues K141, 178–179, D187, and 211–213; these read EY and RSN. Mg(2+)-binding residues include D248, E260, and N262. Mn(2+) contacts are provided by D248, E260, and N262.

It belongs to the RimK family. The cofactor is Mg(2+). It depends on Mn(2+) as a cofactor.

The chain is Probable alpha-L-glutamate ligase 1 from Pseudoalteromonas atlantica (strain T6c / ATCC BAA-1087).